Reading from the N-terminus, the 308-residue chain is Ribonuclease Z (308 aa).

The Zn(2+) site is built by His62, His64, Asp66, His67, His140, Asp211, and His269. The active-site Proton acceptor is the Asp66.

Belongs to the RNase Z family. Homodimer. The cofactor is Zn(2+).

It catalyses the reaction Endonucleolytic cleavage of RNA, removing extra 3' nucleotides from tRNA precursor, generating 3' termini of tRNAs. A 3'-hydroxy group is left at the tRNA terminus and a 5'-phosphoryl group is left at the trailer molecule.. Functionally, zinc phosphodiesterase, which displays some tRNA 3'-processing endonuclease activity. Probably involved in tRNA maturation, by removing a 3'-trailer from precursor tRNA. This Treponema denticola (strain ATCC 35405 / DSM 14222 / CIP 103919 / JCM 8153 / KCTC 15104) protein is Ribonuclease Z.